The sequence spans 897 residues: Staphylococcal nuclease domain-containing protein 1 (897 aa).

TNase-like domains follow at residues 18–167 (QLQR…LWSE), 194–329 (KPVN…IWKD), 342–499 (RQFV…LHSK), and 528–663 (GRSE…LWAN). The 59-residue stretch at 732–790 (APRRGEFCIAKFADGEWYRARVEKVESPAKVHVFYIDYGNREVLSSTRLAALPPAFSTR) folds into the Tudor domain.

It is found in the cytoplasm. In Danio rerio (Zebrafish), this protein is Staphylococcal nuclease domain-containing protein 1 (snd1).